A 456-amino-acid polypeptide reads, in one-letter code: UDP-N-acetylmuramoylalanine--D-glutamate ligase (456 aa).

113-119 contributes to the ATP binding site; that stretch reads GTNGKTT.

It belongs to the MurCDEF family.

The protein localises to the cytoplasm. It catalyses the reaction UDP-N-acetyl-alpha-D-muramoyl-L-alanine + D-glutamate + ATP = UDP-N-acetyl-alpha-D-muramoyl-L-alanyl-D-glutamate + ADP + phosphate + H(+). It functions in the pathway cell wall biogenesis; peptidoglycan biosynthesis. Functionally, cell wall formation. Catalyzes the addition of glutamate to the nucleotide precursor UDP-N-acetylmuramoyl-L-alanine (UMA). The sequence is that of UDP-N-acetylmuramoylalanine--D-glutamate ligase from Rippkaea orientalis (strain PCC 8801 / RF-1) (Cyanothece sp. (strain PCC 8801)).